The primary structure comprises 633 residues: DNA polymerase DpoZ (633 aa).

This sequence belongs to the DNA polymerase type-A family. DpoZ subfamily.

The catalysed reaction is DNA(n) + a 2'-deoxyribonucleoside 5'-triphosphate = DNA(n+1) + diphosphate. It carries out the reaction dZTP + DNA(n) = DNA(n)-Z + diphosphate. DNA polymerase that preferentially incorporates the non-canonical base aminoadenine/dZTP instead of adenine into the synthesized DNA. More efficient in using dZTP instead of dATP as a substrate. In addition to this preference for dZTP, the phage also encodes a dATP triphosphohydrolase that removes dATP and its precursor dADP from the nucleotide pool of the host. The sequence is that of DNA polymerase DpoZ (dpoZ) from Vibrio phage phiVC8.